Consider the following 293-residue polypeptide: Probable rRNA-processing protein EBP2 homolog (293 aa).

Residues 1 to 37 (MSLEEDIVSDDEMNMIDEDDATDSEAESLSDSDTENE) are compositionally biased toward acidic residues. Disordered regions lie at residues 1 to 45 (MSLE…LAEP) and 150 to 293 (IEES…RQKR). Positions 135 to 190 (HMEKVKSRLLHEKKQIEESEERRKARDNKRMAKEVQSQKMKERAKEKKDNIESVKK) form a coiled coil. Composition is skewed to basic and acidic residues over residues 150–167 (IEES…RMAK), 173–189 (KMKE…ESVK), and 247–256 (KKREFRDSKF). The segment covering 265 to 275 (SKQNTAETTND) has biased composition (polar residues).

Belongs to the EBP2 family. As to quaternary structure, interacts with NSN1.

It localises to the nucleus. Its subcellular location is the nucleolus. Functionally, required for the processing of the 27S pre-rRNA. Plays an important role in plant growth and senescence by modulating ribosome biogenesis in nucleolus. Associates with ribosomes. The polypeptide is Probable rRNA-processing protein EBP2 homolog (Arabidopsis thaliana (Mouse-ear cress)).